The chain runs to 853 residues: DNA mismatch repair protein MutS (853 aa).

Residue 614 to 621 (GPNMGGKS) coordinates ATP.

Belongs to the DNA mismatch repair MutS family.

Functionally, this protein is involved in the repair of mismatches in DNA. It is possible that it carries out the mismatch recognition step. This protein has a weak ATPase activity. The chain is DNA mismatch repair protein MutS from Escherichia coli (strain 55989 / EAEC).